We begin with the raw amino-acid sequence, 254 residues long: 3-dehydroquinate dehydratase (254 aa).

3-dehydroquinate is bound by residues Glu-47–Arg-49 and Arg-83. Catalysis depends on His-144, which acts as the Proton donor/acceptor. Lys-171 (schiff-base intermediate with substrate) is an active-site residue. 3-dehydroquinate is bound by residues Arg-214, Ser-233, and Gln-237.

Belongs to the type-I 3-dehydroquinase family. Homodimer.

It carries out the reaction 3-dehydroquinate = 3-dehydroshikimate + H2O. The protein operates within metabolic intermediate biosynthesis; chorismate biosynthesis; chorismate from D-erythrose 4-phosphate and phosphoenolpyruvate: step 3/7. Its function is as follows. Involved in the third step of the chorismate pathway, which leads to the biosynthesis of aromatic amino acids. Catalyzes the cis-dehydration of 3-dehydroquinate (DHQ) and introduces the first double bond of the aromatic ring to yield 3-dehydroshikimate. The polypeptide is 3-dehydroquinate dehydratase (Bacillus licheniformis (strain ATCC 14580 / DSM 13 / JCM 2505 / CCUG 7422 / NBRC 12200 / NCIMB 9375 / NCTC 10341 / NRRL NRS-1264 / Gibson 46)).